Consider the following 166-residue polypeptide: Lipoprotein signal peptidase (166 aa).

4 helical membrane passes run 9–29 (ASGA…FDQL), 45–65 (ALTS…FGFL), 71–91 (WQRW…CFLL), and 100–120 (FSVS…DRLV). Active-site residues include D126 and D144. The helical transmembrane segment at 135-155 (WHFPAFNLADSAITVGAVLLI) threads the bilayer.

Belongs to the peptidase A8 family.

It localises to the cell inner membrane. It carries out the reaction Release of signal peptides from bacterial membrane prolipoproteins. Hydrolyzes -Xaa-Yaa-Zaa-|-(S,diacylglyceryl)Cys-, in which Xaa is hydrophobic (preferably Leu), and Yaa (Ala or Ser) and Zaa (Gly or Ala) have small, neutral side chains.. Its pathway is protein modification; lipoprotein biosynthesis (signal peptide cleavage). In terms of biological role, this protein specifically catalyzes the removal of signal peptides from prolipoproteins. This chain is Lipoprotein signal peptidase, found in Burkholderia cenocepacia (strain HI2424).